Here is a 27-residue protein sequence, read N- to C-terminus: Trypsin inhibitor 1 (27 aa).

As to quaternary structure, homodimer. In terms of processing, contains disulfide bonds. Post-translationally, glycosylated.

In terms of biological role, inhibits trypsin (IC(50)=1.25 uM) but not chymotrypsin or papain. Has antibacterial activity against S.enterica ATCC 10708 (MIC=5 ug/ml) and S.aureus ATCC 25923 (MIC=5 ug/ml) but not against B.subtilis ATCC 6633 or P.aeruginosa ATCC 25619. Has no hemolytic activity against human erythrocytes. Is not toxic to mice. The sequence is that of Trypsin inhibitor 1 from Jatropha curcas (Barbados nut).